The primary structure comprises 621 residues: Elongation factor 4 (621 aa).

A tr-type G domain is found at 21 to 203 (DLIRNICIIA…AIVKRVPPPK (183 aa)). GTP is bound by residues 33-38 (DHGKTT) and 150-153 (NKID).

It belongs to the TRAFAC class translation factor GTPase superfamily. Classic translation factor GTPase family. LepA subfamily.

The protein localises to the cell inner membrane. It catalyses the reaction GTP + H2O = GDP + phosphate + H(+). Its function is as follows. Required for accurate and efficient protein synthesis under certain stress conditions. May act as a fidelity factor of the translation reaction, by catalyzing a one-codon backward translocation of tRNAs on improperly translocated ribosomes. Back-translocation proceeds from a post-translocation (POST) complex to a pre-translocation (PRE) complex, thus giving elongation factor G a second chance to translocate the tRNAs correctly. Binds to ribosomes in a GTP-dependent manner. The protein is Elongation factor 4 of Thermotoga maritima (strain ATCC 43589 / DSM 3109 / JCM 10099 / NBRC 100826 / MSB8).